We begin with the raw amino-acid sequence, 895 residues long: MSSKLRDLIKTVRSCKTAAEERSQIAKESALIRTAMKEEDLESRQRNVAKLLYIHMLGYPTQFGQMECLKLIVSPSYADKRIGYLGLMLLLDEKQEVLLLATNCIRGDIMNSNQFIVGVSLCAFGNICSTAMARDISPEIEKVISHSNPYIRKKAALCAIRVLRKVPDLTENYIPKIKALLSERNHAVILTALTLIIEICEMDSTQIIHFKKMVPQLVRILKSLTSSGYLPEHDIGGVTDPFLQVKILRLLRILGQNDPEASDAMNDILAQVSTNTDSTKNVGNAILYECVQTIMTIESENGLKVMAINILGRFLLNRDNNIRYVALNTLSRVVNTDIQAVQRHRNTIVECLKDPDVSIRCRALDLIYSLVTESNIRVLVRELLNFLLIADAQFKSELVAKLCIVTEKYAPNKRWQIDTILRVMSIAGNFIPDEVPSNLIQLISSTPELSSYAVQKLYLALKQDITQQPLTQVGLWCIGEYGDLLVADKSQLPKDEDGLSLNVSEQAVIDIIDLIFRHATTTQATRQYSLTSLAKLSSRFSQSSLQRIKTMIDNYKQNINLELQQRACEYSTLFDFDKKASILDRMPPIEKQEESPHIGNKNIPTQTPPQQHYQQQQQQPQQQSSQFGSILDGLDSPTQSSANSGNNNNNNNKQGGNAMSLLEDIFGSAPTPTSNGNMNNNNNMNNMNNNMNNNYAMGGMGMNNNNNNSMGGMMNNNNNNNNNNNNNNNNNKSQASALLDIMGDLQLTPTPQQPQSQSQQALSPTNQTSVLQPVPQPLTFLVYQKHGLNISYECSKPQPNNLSLTNINMVITNTGSSPITNFSLQAAVPKYLKIQLLAPSSTVIPPNNSGEVTQVSKVLNSQQGQKPILLRLKLDFQINGQPFSDVPDTPLPSLF.

5 HEAT repeats span residues 130 to 166 (TAMARDISPEIEKVISHSNPYIRKKAALCAIRVLRKV), 167 to 205 (PDLTENYIPKIKALLSERNHAVILTALTLIIEICEMDST), 211 to 256 (KKMV…ILGQ), 301 to 339 (NGLKVMAINILGRFLLNRDNNIRYVALNTLSRVVNTDIQ), and 341 to 376 (VQRHRNTIVECLKDPDVSIRCRALDLIYSLVTESNI). Disordered stretches follow at residues 591 to 687 (KQEE…MNNM), 706 to 733 (NNNSMGGMMNNNNNNNNNNNNNNNNNKS), and 746 to 770 (QLTPTPQQPQSQSQQALSPTNQTSV). Low complexity-rich tracts occupy residues 604 to 626 (PTQTPPQQHYQQQQQQPQQQSSQ), 639 to 658 (QSSANSGNNNNNNNKQGGNA), 675 to 687 (NGNMNNNNNMNNM), 706 to 731 (NNNSMGGMMNNNNNNNNNNNNNNNNN), and 746 to 765 (QLTPTPQQPQSQSQQALSPT). Residues 775 to 893 (PQPLTFLVYQ…SDVPDTPLPS (119 aa)) form the GAE domain.

This sequence belongs to the adaptor complexes large subunit family. In terms of assembly, adaptor protein complex 1 (AP-1) is a heterotetramer composed of two large adaptins (gamma-type subunit and beta-type subunit), a medium adaptin (mu-type subunit) and a small adaptin (sigma-type subunit). Interacts with rhgA.

The protein resides in the golgi apparatus. It is found in the trans-Golgi network. It localises to the cytoplasmic vesicle. Its subcellular location is the clathrin-coated vesicle membrane. In terms of biological role, subunit of clathrin-associated adaptor protein complex 1 that plays a role in protein sorting in the trans-Golgi network (TGN) and endosomes. The AP complexes mediate the recruitment of clathrin to membranes and the recognition of sorting signals within the cytosolic tails of transmembrane cargo molecules. Also involved in early steps of phagocytosis and macropinocytosis. This is AP-1 complex subunit gamma (ap1g1) from Dictyostelium discoideum (Social amoeba).